We begin with the raw amino-acid sequence, 289 residues long: Mas-related G-protein coupled receptor member G (289 aa).

Residues 1–13 are Extracellular-facing; it reads MLSIFNIWGTFNR. The chain crosses the membrane as a helical span at residues 14–34; it reads VLFFLSLTVSLAGLAGNTLLL. The Cytoplasmic portion of the chain corresponds to 35-49; that stretch reads WHLGLRIKKGPFNTY. The helical transmembrane segment at 50–70 threads the bilayer; it reads LLHLAAADFLFLSCQVGFSIA. At 71–80 the chain is on the extracellular side; sequence KIASGYEDTL. Residues 81-101 form a helical membrane-spanning segment; sequence YFPVTFLWFAVGLWLLAAFIV. Residues 102 to 123 lie on the Cytoplasmic side of the membrane; the sequence is DCCLSYMFPSFCGPNCRPRYTS. A helical transmembrane segment spans residues 124–144; it reads FVLCLVIWALTMLAVLLPANA. Topologically, residues 145 to 164 are extracellular; the sequence is CGLLYNRMSLLVCLKYHWVS. Residues 165 to 185 form a helical membrane-spanning segment; that stretch reads VVWLGVLASTACGASMFLLVF. The Cytoplasmic segment spans residues 186-200; it reads GNCCSSQPPSKFCKL. A helical membrane pass occupies residues 201 to 221; it reads AQCSGILLFFCRLPLVFYWCL. Residue Arg-222 is a topological domain, extracellular. The helical transmembrane segment at 223–243 threads the bilayer; it reads PVIKFLLPFFFPLATLLACID. The Cytoplasmic portion of the chain corresponds to 244–289; it reads SSAKPLLYYLKGRQLRKEPLQVALNRALGEESQSSSGGISLPMSRV.

Belongs to the G-protein coupled receptor 1 family. Mas subfamily.

It is found in the cell membrane. In terms of biological role, orphan receptor. May regulate nociceptor function and/or development, including the sensation or modulation of pain. The sequence is that of Mas-related G-protein coupled receptor member G (Mrgprg) from Rattus norvegicus (Rat).